Reading from the N-terminus, the 286-residue chain is Shikimate dehydrogenase (NADP(+)) (286 aa).

Shikimate-binding positions include 22–24 (SRS) and Thr-71. Lys-75 functions as the Proton acceptor in the catalytic mechanism. Glu-87 contacts NADP(+). Shikimate contacts are provided by Asn-96 and Asp-111. Residues 136–140 (GAGGA), 160–165 (NRTPER), and Ile-225 each bind NADP(+). Position 227 (Tyr-227) interacts with shikimate. Gly-248 serves as a coordination point for NADP(+).

It belongs to the shikimate dehydrogenase family. Homodimer.

It carries out the reaction shikimate + NADP(+) = 3-dehydroshikimate + NADPH + H(+). Its pathway is metabolic intermediate biosynthesis; chorismate biosynthesis; chorismate from D-erythrose 4-phosphate and phosphoenolpyruvate: step 4/7. Functionally, involved in the biosynthesis of the chorismate, which leads to the biosynthesis of aromatic amino acids. Catalyzes the reversible NADPH linked reduction of 3-dehydroshikimate (DHSA) to yield shikimate (SA). In Sinorhizobium medicae (strain WSM419) (Ensifer medicae), this protein is Shikimate dehydrogenase (NADP(+)).